The sequence spans 125 residues: Acidic phospholipase A2 HTe (125 aa).

Cystine bridges form between Cys11-Cys77, Cys27-Cys124, Cys29-Cys45, Cys44-Cys105, Cys51-Cys98, Cys61-Cys91, and Cys84-Cys96. Residues Tyr28, Gly30, and Gly32 each contribute to the Ca(2+) site. His48 is an active-site residue. Residue Asp49 participates in Ca(2+) binding. Asp99 is an active-site residue.

The protein belongs to the phospholipase A2 family. Group I subfamily. D49 sub-subfamily. The cofactor is Ca(2+). No glycosylation was detected on this protein. As to expression, expressed by the venom gland.

Its subcellular location is the secreted. The enzyme catalyses a 1,2-diacyl-sn-glycero-3-phosphocholine + H2O = a 1-acyl-sn-glycero-3-phosphocholine + a fatty acid + H(+). Snake venom phospholipase A2 (PLA2) that blocks neuromuscular transmission, but that does not produce blockade by virtue of a selective action on nerve endings. Instead, the toxin acts both on nerve and on muscle. PLA2 catalyzes the calcium-dependent hydrolysis of the 2-acyl groups in 3-sn-phosphoglycerides. The chain is Acidic phospholipase A2 HTe from Notechis scutatus scutatus (Mainland tiger snake).